Consider the following 412-residue polypeptide: Chorismate synthase (412 aa).

Positions 40 and 46 each coordinate NADP(+). FMN-binding positions include 134–136 (RAS), 255–256 (QA), Gly299, 314–318 (KPIAT), and Arg340.

It belongs to the chorismate synthase family. In terms of assembly, homotetramer. Requires FMNH2 as cofactor.

The enzyme catalyses 5-O-(1-carboxyvinyl)-3-phosphoshikimate = chorismate + phosphate. It functions in the pathway metabolic intermediate biosynthesis; chorismate biosynthesis; chorismate from D-erythrose 4-phosphate and phosphoenolpyruvate: step 7/7. Its function is as follows. Catalyzes the anti-1,4-elimination of the C-3 phosphate and the C-6 proR hydrogen from 5-enolpyruvylshikimate-3-phosphate (EPSP) to yield chorismate, which is the branch point compound that serves as the starting substrate for the three terminal pathways of aromatic amino acid biosynthesis. This reaction introduces a second double bond into the aromatic ring system. The chain is Chorismate synthase from Clavibacter michiganensis subsp. michiganensis (strain NCPPB 382).